A 289-amino-acid chain; its full sequence is Phosphatidylinositol:ceramide inositolphosphotransferase 3 (289 aa).

The next 5 helical transmembrane spans lie at L33–Y53, A77–H97, V115–L135, V169–V189, and R199–S219. H181 is an active-site residue. Catalysis depends on residues H222 and D226. Residues Y223 to S243 form a helical membrane-spanning segment. A disordered region spans residues A249 to H289. A compositionally biased stretch (basic and acidic residues) spans K266–L279. A compositionally biased stretch (polar residues) spans L280–H289.

The protein belongs to the sphingomyelin synthase family. In terms of tissue distribution, mostly expressed in stems and flowers, and, to a lower extent, in leaves, roots and siliques.

It is found in the membrane. Functionally, catalyzes the transfer of the phosphorylinositol group from phosphatidylinositol (PI) to phytoceramide, an essential step in sphingolipid biosynthesis. The protein is Phosphatidylinositol:ceramide inositolphosphotransferase 3 (IPCS3) of Arabidopsis thaliana (Mouse-ear cress).